The chain runs to 95 residues: Acylphosphatase (95 aa).

One can recognise an Acylphosphatase-like domain in the interval 7–95; the sequence is CTMAWVYGSV…RSWDKFAILY (89 aa). Residues Arg22 and Asn40 contribute to the active site.

The protein belongs to the acylphosphatase family.

The enzyme catalyses an acyl phosphate + H2O = a carboxylate + phosphate + H(+). The protein is Acylphosphatase (acyP) of Klebsiella pneumoniae subsp. pneumoniae (strain ATCC 700721 / MGH 78578).